A 470-amino-acid chain; its full sequence is Light-independent protochlorophyllide reductase subunit N (470 aa).

The [4Fe-4S] cluster site is built by Cys-22, Cys-47, and Cys-107.

This sequence belongs to the BchN/ChlN family. In terms of assembly, protochlorophyllide reductase is composed of three subunits; ChlL, ChlN and ChlB. Forms a heterotetramer of two ChlB and two ChlN subunits. Requires [4Fe-4S] cluster as cofactor.

Its subcellular location is the plastid. It localises to the chloroplast. The enzyme catalyses chlorophyllide a + oxidized 2[4Fe-4S]-[ferredoxin] + 2 ADP + 2 phosphate = protochlorophyllide a + reduced 2[4Fe-4S]-[ferredoxin] + 2 ATP + 2 H2O. Its pathway is porphyrin-containing compound metabolism; chlorophyll biosynthesis (light-independent). Functionally, component of the dark-operative protochlorophyllide reductase (DPOR) that uses Mg-ATP and reduced ferredoxin to reduce ring D of protochlorophyllide (Pchlide) to form chlorophyllide a (Chlide). This reaction is light-independent. The NB-protein (ChlN-ChlB) is the catalytic component of the complex. The polypeptide is Light-independent protochlorophyllide reductase subunit N (Pinus koraiensis (Korean pine)).